We begin with the raw amino-acid sequence, 457 residues long: Acetylcholine receptor subunit alpha (457 aa).

The N-terminal stretch at 1–20 (MELTAVLLLLGLCSAGTVLG) is a signal peptide. Over 21–230 (SEHETRLVAK…ITYHFVMQRL (210 aa)) the chain is Extracellular. Intrachain disulfides connect cysteine 148–cysteine 162 and cysteine 212–cysteine 213. Asparagine 161 is a glycosylation site (N-linked (GlcNAc...) asparagine). A run of 3 helical transmembrane segments spans residues 231-255 (PLYF…VFYL), 263-281 (MTLS…LVIV), and 297-316 (YMLF…VIVI). Topologically, residues 317-428 (NTHHRSPSTH…WKYVAMVMDH (112 aa)) are cytoplasmic. Residues 429-447 (ILLGVFMLVCLIGTLAVFA) traverse the membrane as a helical segment.

This sequence belongs to the ligand-gated ion channel (TC 1.A.9) family. Acetylcholine receptor (TC 1.A.9.1) subfamily. Alpha-1/CHRNA1 sub-subfamily. In terms of assembly, one of the alpha chains that assemble within the acetylcholine receptor, a pentamer of two alpha chains, a beta, a delta, and a gamma (in immature muscle) or epsilon (in mature muscle) chains. The muscle heteropentamer composed of alpha-1, beta-1, delta, epsilon subunits interacts with the alpha-conotoxin ImII.

Its subcellular location is the postsynaptic cell membrane. It localises to the cell membrane. The enzyme catalyses K(+)(in) = K(+)(out). It catalyses the reaction Na(+)(in) = Na(+)(out). In terms of biological role, upon acetylcholine binding, the AChR responds by an extensive change in conformation that affects all subunits and leads to opening of an ion-conducting channel across the plasma membrane. The sequence is that of Acetylcholine receptor subunit alpha (Chrna1) from Rattus norvegicus (Rat).